A 107-amino-acid polypeptide reads, in one-letter code: MAQNKLHVKKGDMVVVISGKDKGKKGRVLQAFPKEGKVIVEGVNVVTKHRKATRPQKPGGIIHQEAPIHSSKVMLYCENCGRGVRYGIKILENGEKVRYCKRCNETL.

Belongs to the universal ribosomal protein uL24 family. Part of the 50S ribosomal subunit.

In terms of biological role, one of two assembly initiator proteins, it binds directly to the 5'-end of the 23S rRNA, where it nucleates assembly of the 50S subunit. Its function is as follows. One of the proteins that surrounds the polypeptide exit tunnel on the outside of the subunit. This Caldanaerobacter subterraneus subsp. tengcongensis (strain DSM 15242 / JCM 11007 / NBRC 100824 / MB4) (Thermoanaerobacter tengcongensis) protein is Large ribosomal subunit protein uL24.